The sequence spans 342 residues: Cathepsin B-like cysteine proteinase (342 aa).

Positions 1 to 17 (MLKIAVYIVSLFTFLEA) are cleaved as a signal peptide. A propeptide spans 18-89 (HVTTRNNQRI…TVDHHDLNVE (72 aa)) (activation peptide). Cystine bridges form between Cys103–Cys132, Cys115–Cys159, Cys151–Cys217, Cys152–Cys155, Cys188–Cys221, and Cys196–Cys207. Cys118 is a catalytic residue. Active-site residues include His288 and Asn308.

The protein belongs to the peptidase C1 family. As to expression, intestine (gut).

Thiol protease. Has a role as a digestive enzyme. This chain is Cathepsin B-like cysteine proteinase (CATB), found in Schistosoma japonicum (Blood fluke).